The primary structure comprises 292 residues: ATP synthase gamma chain (292 aa).

It belongs to the ATPase gamma chain family. In terms of assembly, F-type ATPases have 2 components, CF(1) - the catalytic core - and CF(0) - the membrane proton channel. CF(1) has five subunits: alpha(3), beta(3), gamma(1), delta(1), epsilon(1). CF(0) has three main subunits: a, b and c.

It localises to the cell inner membrane. Produces ATP from ADP in the presence of a proton gradient across the membrane. The gamma chain is believed to be important in regulating ATPase activity and the flow of protons through the CF(0) complex. This Nitrobacter winogradskyi (strain ATCC 25391 / DSM 10237 / CIP 104748 / NCIMB 11846 / Nb-255) protein is ATP synthase gamma chain.